A 555-amino-acid polypeptide reads, in one-letter code: Embryonic protein DC-8 (555 aa).

Residues 83–115 (RENTDYAYDKGREGGDVAAQKAEEAKEKAKMAK) show a composition bias toward basic and acidic residues. Disordered regions lie at residues 83-118 (RENTDYAYDKGREGGDVAAQKAEEAKEKAKMAKDTT) and 132-151 (KAEEAKEKAAQKAEETKEKA). Repeat copies occupy residues 97 to 114 (GDVAAQKAEEAKEKAKMA), 115 to 125 (KDTTMGKAGEY), 126 to 140 (KDYTAQKAEEAKEKA), 141 to 154 (AQKAEETKEKAGEY), 155 to 176 (KNYTAQKAGEAKDTTLGKAGEY), 177 to 191 (KDYAAQKAAEAKDTT), 192 to 205 (AQKAAEAKEKTGEY), 206 to 216 (KDYAAQKAAEA), 217 to 237 (KVLAAQKAAEAKDTTGKDGEY), 238 to 259 (KDYAAQKAAEAKDATMQKTGEY), 260 to 281 (KDYAAQKTAETKDATMEKAKEY), 282 to 303 (KEYAAQKAAEAKDATMQKTGEY), 304 to 325 (KDYSAQKAAETKDATMEKTKEY), 326 to 343 (KDYTAQKAAETKDATMEK), 344 to 358 (AKEAKDTTVQKTGEY), 359 to 376 (KDYAAEKAKEGKDVTVEK), and 377 to 391 (AKEGKDTTVGKMTEL). Residues 97–391 (GDVAAQKAEE…DTTVGKMTEL (295 aa)) are 17 X approximate tandem repeats. The disordered stretch occupies residues 184 to 204 (AAEAKDTTAQKAAEAKEKTGE). Positions 444–465 (LQEEGVKDEAKQRAEADRETAG) are enriched in basic and acidic residues. The tract at residues 444–472 (LQEEGVKDEAKQRAEADRETAGDRGSAAK) is disordered.

This sequence belongs to the LEA type 4 family.

Its subcellular location is the cytoplasm. It is found in the secreted. The protein resides in the cell wall. In terms of biological role, may play a role in late embryogeny. The protein is Embryonic protein DC-8 of Daucus carota (Wild carrot).